Here is a 137-residue protein sequence, read N- to C-terminus: Ribosome-binding factor A (137 aa).

The protein belongs to the RbfA family. Monomer. Binds 30S ribosomal subunits, but not 50S ribosomal subunits or 70S ribosomes.

It localises to the cytoplasm. Functionally, one of several proteins that assist in the late maturation steps of the functional core of the 30S ribosomal subunit. Associates with free 30S ribosomal subunits (but not with 30S subunits that are part of 70S ribosomes or polysomes). Required for efficient processing of 16S rRNA. May interact with the 5'-terminal helix region of 16S rRNA. This is Ribosome-binding factor A from Cereibacter sphaeroides (strain ATCC 17029 / ATH 2.4.9) (Rhodobacter sphaeroides).